The chain runs to 1018 residues: Contactin-1 (1018 aa).

The N-terminal stretch at 1 to 20 (MKMWLLFSLLVIISFKTCLS) is a signal peptide. 6 Ig-like C2-type domains span residues 41 to 131 (PIFE…ATLS), 137 to 223 (PFPP…KSVF), 241 to 326 (PADI…ARIY), 331 to 407 (PEWV…AELK), 413 to 500 (PTFE…GTLV), and 504 to 601 (PTRI…LVVR). Intrachain disulfides connect C65–C114 and C158–C211. Residues N208 and N258 are each glycosylated (N-linked (GlcNAc...) asparagine). C263 and C310 are disulfide-bonded. A glycan (N-linked (GlcNAc...) asparagine) is linked at N338. 2 cysteine pairs are disulfide-bonded: C352-C391 and C436-C484. 4 N-linked (GlcNAc...) asparagine glycosylation sites follow: N457, N473, N494, and N521. The cysteines at positions 526 and 583 are disulfide-linked. N591 carries an N-linked (GlcNAc...) asparagine glycan. 4 consecutive Fibronectin type-III domains span residues 606–704 (PPGG…TDGA), 709–806 (APSD…SAQD), 811–906 (APTA…APPS), and 907–1000 (QPPR…ILSP). Disordered regions lie at residues 698 to 718 (KIKTDGAAPNVAPSDVGGGGG) and 891 to 910 (PPSDMTETFTKKAPPSQPPR). Residue S999 is the site of GPI-anchor amidated serine attachment. The propeptide at 1000–1018 (PCLLGFLLPALGILVYLEF) is removed in mature form.

The protein belongs to the immunoglobulin superfamily. Contactin family. As to quaternary structure, monomer. Interacts with CNTNAP1 in cis form. Binds to the carbonic-anhydrase like domain of PTPRZ1. Interacts with NOTCH1 and TNR. Detected in a complex with NRCAM and PTPRB. Interacts with TASOR.

Its subcellular location is the cell membrane. Its function is as follows. Contactins mediate cell surface interactions during nervous system development. Involved in the formation of paranodal axo-glial junctions in myelinated peripheral nerves and in the signaling between axons and myelinating glial cells via its association with CNTNAP1. Participates in oligodendrocytes generation by acting as a ligand of NOTCH1. Its association with NOTCH1 promotes NOTCH1 activation through the released notch intracellular domain (NICD) and subsequent translocation to the nucleus. Interaction with TNR induces a repulsion of neurons and an inhibition of neurite outgrowth. This Bos taurus (Bovine) protein is Contactin-1 (CNTN1).